The chain runs to 552 residues: L-ascorbate oxidase (552 aa).

Plastocyanin-like domains are found at residues 1–122 and 134–300; these read SQIR…LIVD and DGEI…NYLP. 3 cysteine pairs are disulfide-bonded: Cys19/Cys201, Cys81/Cys538, and Cys180/Cys193. The Cu cation site is built by His60 and His62. N-linked (GlcNAc...) asparagine glycosylation is present at Asn92. Cu cation is bound by residues His104 and His106. N-linked (GlcNAc...) asparagine glycans are attached at residues Asn325 and Asn440. Residues 344–523 form the Plastocyanin-like 3 domain; the sequence is NRRIFLLNTQ…HMGMGVVFAE (180 aa). His445, His448, His450, His506, Cys507, His508, His512, and Met517 together coordinate Cu cation.

The protein belongs to the multicopper oxidase family. As to quaternary structure, dimer. Cu cation serves as cofactor.

It localises to the secreted. It catalyses the reaction 4 L-ascorbate + O2 = 4 monodehydro-L-ascorbate radical + 2 H2O. Its function is as follows. May be involved in a redox system involving ascorbic acid. In Cucurbita pepo var. melopepo (Zucchini), this protein is L-ascorbate oxidase.